The chain runs to 1067 residues: Ubiquitin carboxyl-terminal hydrolase 26 (1067 aa).

Positions M1 to R12 are enriched in basic residues. Residues M1 to S22 are disordered. The 337-residue stretch at A106–R442 folds into the USP domain. The active-site Nucleophile is the C115. Catalysis depends on H359, which acts as the Proton acceptor. Residues K385–S418 form a disordered region. Polar residues predominate over residues E390–S418. 3 DUSP domains span residues N503–C595, D610–C711, and T738–I861. Residues F948–E1031 form the Ubiquitin-like domain.

Belongs to the peptidase C19 family. As to expression, expressed in seedlings, roots, stems, leaves and inflorescences.

It localises to the nucleus. It carries out the reaction Thiol-dependent hydrolysis of ester, thioester, amide, peptide and isopeptide bonds formed by the C-terminal Gly of ubiquitin (a 76-residue protein attached to proteins as an intracellular targeting signal).. Functionally, recognizes and hydrolyzes the peptide bond at the C-terminal Gly of ubiquitin. Involved in the processing of poly-ubiquitin precursors as well as that of ubiquitinated proteins. Deubiquitinates H2BK143ub1 of histone H2B. This chain is Ubiquitin carboxyl-terminal hydrolase 26 (UBP26), found in Arabidopsis thaliana (Mouse-ear cress).